A 247-amino-acid chain; its full sequence is Oil body-associated protein 2B (247 aa).

The tract at residues 1 to 28 (MASSDKVPVACPASSGDGKEPMGNPTKT) is disordered.

The protein belongs to the OBAP family.

This chain is Oil body-associated protein 2B, found in Arabidopsis thaliana (Mouse-ear cress).